Here is a 469-residue protein sequence, read N- to C-terminus: Uronate isomerase (469 aa).

This sequence belongs to the metallo-dependent hydrolases superfamily. Uronate isomerase family.

It carries out the reaction D-glucuronate = D-fructuronate. The catalysed reaction is aldehydo-D-galacturonate = keto-D-tagaturonate. The protein operates within carbohydrate metabolism; pentose and glucuronate interconversion. This is Uronate isomerase from Mesorhizobium japonicum (strain LMG 29417 / CECT 9101 / MAFF 303099) (Mesorhizobium loti (strain MAFF 303099)).